A 603-amino-acid polypeptide reads, in one-letter code: Adenine deaminase (603 aa).

The protein belongs to the metallo-dependent hydrolases superfamily. Adenine deaminase family. Homodimer. Mn(2+) is required as a cofactor.

The enzyme catalyses adenine + H2O + H(+) = hypoxanthine + NH4(+). This chain is Adenine deaminase, found in Klebsiella pneumoniae (strain 342).